Consider the following 311-residue polypeptide: 4-diphosphocytidyl-2-C-methyl-D-erythritol kinase (311 aa).

Residue K9 is part of the active site. Residue 95–105 participates in ATP binding; the sequence is PLGAGLAGGST. D137 is a catalytic residue.

This sequence belongs to the GHMP kinase family. IspE subfamily.

It catalyses the reaction 4-CDP-2-C-methyl-D-erythritol + ATP = 4-CDP-2-C-methyl-D-erythritol 2-phosphate + ADP + H(+). It functions in the pathway isoprenoid biosynthesis; isopentenyl diphosphate biosynthesis via DXP pathway; isopentenyl diphosphate from 1-deoxy-D-xylulose 5-phosphate: step 3/6. Functionally, catalyzes the phosphorylation of the position 2 hydroxy group of 4-diphosphocytidyl-2C-methyl-D-erythritol. The chain is 4-diphosphocytidyl-2-C-methyl-D-erythritol kinase from Thermosynechococcus vestitus (strain NIES-2133 / IAM M-273 / BP-1).